The chain runs to 418 residues: Tyrosine--tRNA ligase (418 aa).

An L-tyrosine-binding site is contributed by Tyr34. Positions 39-48 (PTADSLHLGH) match the 'HIGH' region motif. The L-tyrosine site is built by Tyr169 and Gln173. A 'KMSKS' region motif is present at residues 229-233 (KFGKS). Residue Lys232 participates in ATP binding. The 67-residue stretch at 352–418 (LNLVDMLVTA…GKKKYAVLTY (67 aa)) folds into the S4 RNA-binding domain.

Belongs to the class-I aminoacyl-tRNA synthetase family. TyrS type 1 subfamily. Homodimer.

It localises to the cytoplasm. The catalysed reaction is tRNA(Tyr) + L-tyrosine + ATP = L-tyrosyl-tRNA(Tyr) + AMP + diphosphate + H(+). Catalyzes the attachment of tyrosine to tRNA(Tyr) in a two-step reaction: tyrosine is first activated by ATP to form Tyr-AMP and then transferred to the acceptor end of tRNA(Tyr). The sequence is that of Tyrosine--tRNA ligase from Streptococcus pyogenes serotype M3 (strain SSI-1).